Here is a 469-residue protein sequence, read N- to C-terminus: Glutamate--tRNA ligase (469 aa).

The 'HIGH' region motif lies at 11–21 (PSPTGFIHLGN). Basic and acidic residues predominate over residues 118 to 131 (GEKPRYDGTWRPEP). The tract at residues 118-139 (GEKPRYDGTWRPEPGKVLPEPP) is disordered. The 'KMSKS' region motif lies at 243–247 (KMSKR). Position 246 (K246) interacts with ATP.

The protein belongs to the class-I aminoacyl-tRNA synthetase family. Glutamate--tRNA ligase type 1 subfamily. As to quaternary structure, monomer.

The protein localises to the cytoplasm. It carries out the reaction tRNA(Glu) + L-glutamate + ATP = L-glutamyl-tRNA(Glu) + AMP + diphosphate. Catalyzes the attachment of glutamate to tRNA(Glu) in a two-step reaction: glutamate is first activated by ATP to form Glu-AMP and then transferred to the acceptor end of tRNA(Glu). This is Glutamate--tRNA ligase from Burkholderia pseudomallei (strain 668).